Consider the following 119-residue polypeptide: Beta-2-microglobulin (119 aa).

An N-terminal signal peptide occupies residues 1-20 (MFRSVALAVLALLFLSGLEA). Residues 25–114 (PKIQVYSRHP…VTLSGPRTVK (90 aa)) enclose the Ig-like C1-type domain. Cysteine 45 and cysteine 100 are disulfide-bonded.

The protein belongs to the beta-2-microglobulin family. Heterodimer of an alpha chain and a beta chain. Beta-2-microglobulin is the beta-chain of major histocompatibility complex class I molecules.

It localises to the secreted. Functionally, component of the class I major histocompatibility complex (MHC). Involved in the presentation of peptide antigens to the immune system. The protein is Beta-2-microglobulin (B2M) of Chlorocebus aethiops (Green monkey).